Reading from the N-terminus, the 243-residue chain is MSMLCYTLIIAFLIGIWAAPKSEDNVPLGSPATSDLSDTSCAQTHEGLKTSRNTDQRHPAPKKAEDQELGSAANIIVDPKLFQKRRFQSPRVLFSTQPPPLSRDEQSVEFLDNEDTLNRNIRAKRETHPVHNLGEYSVCDSISVWVANKTKAMDIKGKPVTVMVDVNLNNHVFKQYFFETKCRNPNPVPSGCRGIDSGHWNSYCTTTQTFVRALTMEGNQASWRFIRIDTACVCVISRKTENF.

Positions Met1–Ala18 are cleaved as a signal peptide. A propeptide spanning residues Ala19–Arg125 is cleaved from the precursor. A compositionally biased stretch (basic and acidic residues) spans Gly47–Asp66. The disordered stretch occupies residues Gly47–Leu69. 3 cysteine pairs are disulfide-bonded: Cys139/Cys204, Cys182/Cys232, and Cys192/Cys234. Residue Asn148 is glycosylated (N-linked (GlcNAc...) asparagine).

This sequence belongs to the NGF-beta family. Homodimer; non-covalently linked. In terms of tissue distribution, expressed by the venom gland.

It localises to the secreted. Nerve growth factor is important for the development and maintenance of the sympathetic and sensory nervous systems. It stimulates division and differentiation of sympathetic and embryonic sensory neurons as well as basal forebrain cholinergic neurons in the brain. Its relevance in the snake venom is not clear. However, it has been shown to inhibit metalloproteinase-dependent proteolysis of platelet glycoprotein Ib alpha, suggesting a metalloproteinase inhibition to prevent metalloprotease autodigestion and/or protection against prey proteases. Binds a lipid between the two protein chains in the homodimer. The lipid-bound form promotes histamine relase from mouse mast cells, contrary to the lipid-free form. The protein is Venom nerve growth factor 1 of Oxyuranus microlepidotus (Inland taipan).